A 439-amino-acid chain; its full sequence is Xylose isomerase (439 aa).

Catalysis depends on residues histidine 101 and aspartate 104. The Mg(2+) site is built by glutamate 232, glutamate 268, histidine 271, aspartate 296, aspartate 307, aspartate 309, and aspartate 339.

This sequence belongs to the xylose isomerase family. As to quaternary structure, homotetramer. It depends on Mg(2+) as a cofactor.

The protein localises to the cytoplasm. It catalyses the reaction alpha-D-xylose = alpha-D-xylulofuranose. In Serratia proteamaculans (strain 568), this protein is Xylose isomerase.